A 602-amino-acid polypeptide reads, in one-letter code: T-cell surface protein tactile (602 aa).

The first 21 residues, 1-21 (MGRKWTYCVVYTIIQIQFFRG), serve as a signal peptide directing secretion. Over 22–536 (VWEELFNVGD…IIVNQPSDGM (515 aa)) the chain is Extracellular. Ig-like V-type domains follow at residues 24 to 134 (EELF…VYNL) and 138 to 244 (PYTQ…STTV). Asn42, Asn100, Asn107, Asn145, Asn153, Asn163, Asn195, Asn196, Asn258, Asn281, Asn306, Asn330, Asn348, Asn415, Asn436, and Asn514 each carry an N-linked (GlcNAc...) asparagine glycan. Cys45 and Cys118 form a disulfide bridge. An intrachain disulfide couples Cys160 to Cys228. Residues 250–355 (PEILMTVENS…MWNTSSQPIT (106 aa)) enclose the Ig-like C2-type domain. A disulfide bond links Cys271 and Cys335. The interval 402–478 (ENGLTPDATP…PQEPDSPVSW (77 aa)) is disordered. Polar residues predominate over residues 409–433 (ATPQTSNSSMTTKDGNYLEASSGTD). Low complexity predominate over residues 434–448 (AKNSSRAAASSKSGS). A helical transmembrane segment spans residues 537–557 (SWPVLVAALLFFCTLLFGLGV). Residues 558 to 602 (RKWYRYQNEIMERPPPFKPPPPPIKYTYIQEPIGCDLCCHEMEVL) are Cytoplasmic-facing.

Homodimer; disulfide-linked. Interacts with PVR.

It localises to the membrane. May be involved in adhesive interactions of activated T and NK cells during the late phase of the immune response. Promotes NK cell-target adhesion by interacting with PVR present on target cells. May function at a time after T and NK cells have penetrated the endothelium using integrins and selectins, when they are actively engaging diseased cells and moving within areas of inflammation. The polypeptide is T-cell surface protein tactile (Cd96) (Mus musculus (Mouse)).